We begin with the raw amino-acid sequence, 966 residues long: C4 phosphoenolpyruvate carboxylase (966 aa).

The residue at position 11 (Ser-11) is a Phosphoserine. His-172 is an active-site residue. Residues Trp-283, Arg-450, and Asp-597 each coordinate D-glucose 6-phosphate. Lys-600 is a catalytic residue. Arg-635 lines the D-glucose 6-phosphate pocket. The active site involves Arg-641. Residue Arg-641 coordinates L-aspartate. Thr-665 is a binding site for D-glucose 6-phosphate. Gln-673 lines the L-aspartate pocket. Residues Arg-753 and 767–769 (RAI) each bind D-glucose 6-phosphate. Residues Lys-829, Arg-888, and Asn-964 each coordinate L-aspartate.

This sequence belongs to the PEPCase type 1 family. In terms of assembly, homotetramer. Requires Mg(2+) as cofactor. In terms of tissue distribution, expressed in mesophyll cells, but not in bundle-sheath, roots, stems and flowers.

It localises to the cytoplasm. The catalysed reaction is oxaloacetate + phosphate = phosphoenolpyruvate + hydrogencarbonate. Its pathway is photosynthesis; C4 acid pathway. Its activity is regulated as follows. 5 fold activation by the allosteric regulator glucose-6-phosphate. Low sensitivity to inhibition by L-malate and L-aspartate. Up-regulated by light-reversible phosphorylation. Functionally, forms oxaloacetate through the carboxylation of phosphoenolpyruvate (PEP). Catalyzes the first step of C4 photosynthesis. The sequence is that of C4 phosphoenolpyruvate carboxylase from Flaveria trinervia (Clustered yellowtops).